Consider the following 87-residue polypeptide: Antitoxin RelB1 (87 aa).

Antitoxin component of a type II toxin-antitoxin (TA) system. Neutralizes the effect of cognate toxin RelE1, but no other RelE or ParE toxin. This Caulobacter vibrioides (strain ATCC 19089 / CIP 103742 / CB 15) (Caulobacter crescentus) protein is Antitoxin RelB1 (relB1).